Consider the following 159-residue polypeptide: SsrA-binding protein (159 aa).

Basic and acidic residues predominate over residues 140–150; the sequence is RATEKERDWNR. Positions 140-159 are disordered; the sequence is RATEKERDWNRQKQRVLRQR.

Belongs to the SmpB family.

It is found in the cytoplasm. Required for rescue of stalled ribosomes mediated by trans-translation. Binds to transfer-messenger RNA (tmRNA), required for stable association of tmRNA with ribosomes. tmRNA and SmpB together mimic tRNA shape, replacing the anticodon stem-loop with SmpB. tmRNA is encoded by the ssrA gene; the 2 termini fold to resemble tRNA(Ala) and it encodes a 'tag peptide', a short internal open reading frame. During trans-translation Ala-aminoacylated tmRNA acts like a tRNA, entering the A-site of stalled ribosomes, displacing the stalled mRNA. The ribosome then switches to translate the ORF on the tmRNA; the nascent peptide is terminated with the 'tag peptide' encoded by the tmRNA and targeted for degradation. The ribosome is freed to recommence translation, which seems to be the essential function of trans-translation. In Alcanivorax borkumensis (strain ATCC 700651 / DSM 11573 / NCIMB 13689 / SK2), this protein is SsrA-binding protein.